A 394-amino-acid polypeptide reads, in one-letter code: Elongation factor Tu (394 aa).

In terms of domain architecture, tr-type G spans 10–204 (KPHVNVGTIG…HLDTYIPEPE (195 aa)). The segment at 19-26 (GHVDHGKT) is G1. 19 to 26 (GHVDHGKT) contributes to the GTP binding site. Thr26 contributes to the Mg(2+) binding site. Positions 60–64 (GITIN) are G2. Residues 81 to 84 (DCPG) form a G3 region. GTP-binding positions include 81–85 (DCPGH) and 136–139 (NKCD). The interval 136-139 (NKCD) is G4. Residues 174 to 176 (SAL) are G5.

It belongs to the TRAFAC class translation factor GTPase superfamily. Classic translation factor GTPase family. EF-Tu/EF-1A subfamily. In terms of assembly, monomer.

It localises to the cytoplasm. It catalyses the reaction GTP + H2O = GDP + phosphate + H(+). In terms of biological role, GTP hydrolase that promotes the GTP-dependent binding of aminoacyl-tRNA to the A-site of ribosomes during protein biosynthesis. This chain is Elongation factor Tu, found in Klebsiella pneumoniae subsp. pneumoniae (strain ATCC 700721 / MGH 78578).